A 258-amino-acid polypeptide reads, in one-letter code: Ubiquinone/menaquinone biosynthesis C-methyltransferase UbiE (258 aa).

The tract at residues 1-21 (MSESRTSADGGMETSYGFREV) is disordered. Residues Thr81, Asp102, and 130 to 131 (NA) contribute to the S-adenosyl-L-methionine site.

It belongs to the class I-like SAM-binding methyltransferase superfamily. MenG/UbiE family.

The enzyme catalyses a 2-demethylmenaquinol + S-adenosyl-L-methionine = a menaquinol + S-adenosyl-L-homocysteine + H(+). It carries out the reaction a 2-methoxy-6-(all-trans-polyprenyl)benzene-1,4-diol + S-adenosyl-L-methionine = a 5-methoxy-2-methyl-3-(all-trans-polyprenyl)benzene-1,4-diol + S-adenosyl-L-homocysteine + H(+). Its pathway is quinol/quinone metabolism; menaquinone biosynthesis; menaquinol from 1,4-dihydroxy-2-naphthoate: step 2/2. It functions in the pathway cofactor biosynthesis; ubiquinone biosynthesis. Functionally, methyltransferase required for the conversion of demethylmenaquinol (DMKH2) to menaquinol (MKH2) and the conversion of 2-polyprenyl-6-methoxy-1,4-benzoquinol (DDMQH2) to 2-polyprenyl-3-methyl-6-methoxy-1,4-benzoquinol (DMQH2). This Rhizobium johnstonii (strain DSM 114642 / LMG 32736 / 3841) (Rhizobium leguminosarum bv. viciae) protein is Ubiquinone/menaquinone biosynthesis C-methyltransferase UbiE.